The chain runs to 528 residues: Ladinin-1 (528 aa).

The segment at 1–404 (MSVSRKDWSA…NSETPLTRSA (404 aa)) is disordered. Residues Ser38, Ser56, Ser62, Ser72, and Ser76 each carry the phosphoserine modification. The segment covering 88 to 97 (RTRKERRQRR) has biased composition (basic residues). At Ser119 the chain carries Phosphoserine. Residues 134–173 (KKVEALPRRRLSREQRGPWAQDEERLKNRELAEGEKRLPE) show a composition bias toward basic and acidic residues. SEK repeat units lie at residues 184–186 (SEK), 190–192 (SEK), 202–204 (SEK), and 208–210 (SEK). The 6 X SEK repeats stretch occupies residues 184 to 281 (SEKTPVSEKT…MQERKLVSEK (98 aa)). Basic and acidic residues-rich tracts occupy residues 218 to 231 (SLTEKRHSPEKLVP) and 267 to 279 (IVSEKMQERKLVS). 2 SEK repeats span residues 269-271 (SEK) and 279-281 (SEK). Positions 304–316 (EQPQTTGGSQATT) are enriched in polar residues. Phosphoserine is present on residues Ser328, Ser358, Ser367, Ser405, and Ser496. The span at 365 to 377 (TPSPTLLTYSSSL) shows a compositional bias: low complexity. The disordered stretch occupies residues 492-528 (KTQDSGDHGSQEVRKEASVTKRAQWGSKPSTSLDAEV). The span at 495–510 (DSGDHGSQEVRKEASV) shows a compositional bias: basic and acidic residues. Over residues 518 to 528 (SKPSTSLDAEV) the composition is skewed to polar residues.

In terms of tissue distribution, expressed in kidney, lung and keratinocytes followed by liver, spleen and brain. Not expressed in testis, skeletal and heart muscle and in fibroblasts.

It localises to the secreted. Its subcellular location is the extracellular space. The protein localises to the extracellular matrix. It is found in the basement membrane. In terms of biological role, anchoring filament protein which is a component of the basement membrane zone. The polypeptide is Ladinin-1 (Lad1) (Mus musculus (Mouse)).